Here is a 583-residue protein sequence, read N- to C-terminus: L-galactono-1,4-lactone dehydrogenase 2, mitochondrial (583 aa).

A mitochondrion-targeting transit peptide spans 1–36; that stretch reads MRRLLLAGILRRASSSPSSHHHLHLVRALSASSPLP. Positions 37 to 78 are cleaved as a propeptide — removed in mature form; the sequence is ASDADLRKYAGYALLLLGCGAATYYSFPLPPDALHKKAVPFK. The helical transmembrane segment at 45–61 threads the bilayer; sequence YAGYALLLLGCGAATYY. An FAD-binding PCMH-type domain is found at 95–266; it reads THEVHTRVLL…AEVTLQCVER (172 aa).

Requires FAD as cofactor.

It localises to the mitochondrion membrane. It carries out the reaction L-galactono-1,4-lactone + 4 Fe(III)-[cytochrome c] = L-dehydroascorbate + 4 Fe(II)-[cytochrome c] + 5 H(+). Its pathway is cofactor biosynthesis; L-ascorbate biosynthesis. Functionally, involved in the biosynthesis of ascorbic acid. This chain is L-galactono-1,4-lactone dehydrogenase 2, mitochondrial (GLDH2), found in Oryza sativa subsp. japonica (Rice).